An 812-amino-acid chain; its full sequence is Zn(2)-C6 fungal-type transcription factor pigI (812 aa).

The segment at 42-74 (GCLHPRSPPRDRTAMADNSNSSPPASRRREKPQ) is disordered. A DNA-binding region (zn(2)-C6 fungal-type) is located at residues 77-105 (CTLCRRRKLRCDRRQPCETCVRRGLSLSC).

It localises to the nucleus. In terms of biological role, zn(2)-C6 fungal-type transcription factor; part of the gene cluster that mediates the biosynthesis of azaphilone pigments (MonAzPs), a complex mixture of compounds with a common azaphilone skeleton very widely used as food colorants. Acts probably as a negative regulator of the azaphilone pigments (MonAzPs) gene cluster. This is Zn(2)-C6 fungal-type transcription factor pigI from Monascus ruber (Mold).